The sequence spans 623 residues: V-type proton ATPase catalytic subunit A (623 aa).

252 to 259 is an ATP binding site; the sequence is GAFGCGKT.

The protein belongs to the ATPase alpha/beta chains family. V-ATPase is a heteromultimeric enzyme composed of a peripheral catalytic V1 complex (main components: subunits A, B, C, D, E, and F) attached to an integral membrane V0 proton pore complex (main component: the proteolipid protein).

The catalysed reaction is ATP + H2O + 4 H(+)(in) = ADP + phosphate + 5 H(+)(out). In terms of biological role, catalytic subunit of the peripheral V1 complex of vacuolar ATPase. V-ATPase vacuolar ATPase is responsible for acidifying a variety of intracellular compartments in eukaryotic cells. This is V-type proton ATPase catalytic subunit A from Vigna radiata var. radiata (Mung bean).